Reading from the N-terminus, the 541-residue chain is MEFPYHSTVSYNGVTFYFNERATRAYFICGGCLISIPRKHGGEIAKFGHVVRGVGPGDRSVASYVRSELNRTGKTWAVSSNNNCVFLDRVALLAAGSGAVDRDLCGTFDVEVEDPTLADYLVSLPVTHLTLVAGVDVTRENKLKLFPTPTAINTTNGFMYVPNEASFSLVYMRMLELPESLQELVSGLFDGTPEIRDALNGSNDDEKTSIIVSRRAADVVTEDVKADDVPISGEPYSEKQPRRRKKSDHITLSNFVQIRTIPRVMDIWDPRHKATTHCIRALSCAVFFADEVIFKARKWPGLEDELNEARETIYTAVVAVYGERGELPFFGHAYGRDLTSCQRFVIVQYILSRWEAFNCYAVIEDLTRSYVNALPSDDDTDQVAQDLIRTIVDTANSLLREVGFIGTLAETLLFLPLPQLPCYKETSHLAKKEGVRILRLAKTGVGLSDTVPVDVSVTERHEYEISRYLDTLYSGDPCYNGAVRLCRLLGSSIPIALYYNTISGNAFEPYFAGRRYIAYLGALFFGRVHQTPFGDGKKTQR.

The protein belongs to the alphaherpesvirinae UL21 protein family. As to quaternary structure, interacts (via C-terminus) with UL16.

The protein localises to the virion tegument. Its subcellular location is the host cytoplasm. The protein resides in the host nucleus. May participate in DNA packaging/capsid maturation events. Promotes efficient incorporation of tegument proteins UL46, UL49, and US3 homologs into virions. May also play a role in capsid transport to the trans-Golgi network (TGN). The polypeptide is Tegument protein UL21 homolog (Homo sapiens (Human)).